Here is a 282-residue protein sequence, read N- to C-terminus: ADP-ribosyl cyclase/cyclic ADP-ribose hydrolase (282 aa).

The first 24 residues, 1 to 24 (MSPVAIVACVCLAVTLTRISPSEA), serve as a signal peptide directing secretion. 5 disulfide bridges follow: cysteine 39/cysteine 58, cysteine 75/cysteine 155, cysteine 136/cysteine 149, cysteine 230/cysteine 251, and cysteine 263/cysteine 272.

This sequence belongs to the ADP-ribosyl cyclase family. In terms of tissue distribution, ovotestis.

Its subcellular location is the cytoplasmic vesicle. It catalyses the reaction NAD(+) = cyclic ADP-beta-D-ribose + nicotinamide + H(+). The enzyme catalyses NAD(+) + H2O = ADP-D-ribose + nicotinamide + H(+). The catalysed reaction is nicotinate + NADP(+) = nicotinate-adenine dinucleotide phosphate + nicotinamide. With respect to regulation, activity is presumably regulated by its sequestration in vesicles before egg fertilization. After fertilization and upon NADase release, it could then be regulated via its potential phosphorylation sites. Its function is as follows. Synthesizes cyclic ADP-ribose (cADPR), a second messenger for calcium mobilization from endoplasmic reticulum. Might make the Ca(2+) mobilizer nicotinate-adenine dinucleotide phosphate. Does not have cADPR hydrolase activity. The polypeptide is ADP-ribosyl cyclase/cyclic ADP-ribose hydrolase (Aplysia kurodai (Kuroda's sea hare)).